A 268-amino-acid polypeptide reads, in one-letter code: Small ribosomal subunit protein eS1 (268 aa).

The interval 1-21 (MAVGKNKGLSKGGKKGGKKKV) is disordered.

The protein belongs to the eukaryotic ribosomal protein eS1 family. In terms of assembly, component of the small ribosomal subunit. Mature ribosomes consist of a small (40S) and a large (60S) subunit. The 40S subunit contains about 33 different proteins and 1 molecule of RNA (18S). The 60S subunit contains about 49 different proteins and 3 molecules of RNA (28S, 5.8S and 5S).

It is found in the cytoplasm. Its function is as follows. Essential for oogenesis; required for late follicle cell development. The sequence is that of Small ribosomal subunit protein eS1 from Drosophila mojavensis (Fruit fly).